An 88-amino-acid polypeptide reads, in one-letter code: Sigma-conotoxin GVIIIA (88 aa).

A signal peptide spans 1-20 (MMSKMGAMFVLLLLFTLASS). Positions 21-46 (LQEGDVQARKTRLKSDFYRALARDDR) are excised as a propeptide. Proline 55 is modified (4-hydroxyproline). Residue tryptophan 80 is modified to 6'-bromotryptophan. Serine 87 carries the serine amide modification.

Belongs to the conotoxin S superfamily. Contains 5 disulfide bonds. As to expression, expressed by the venom duct.

It is found in the secreted. Functionally, sigma-conotoxins bind and inhibit serotonin-gated ion channels. This peptide selectively and reversibly inhibits 5-hydroxytryptamine 3 receptor (HTR3A) through competitive antagonism (IC(50)=53-86.8 nM). This chain is Sigma-conotoxin GVIIIA, found in Conus geographus (Geography cone).